The following is a 453-amino-acid chain: Carbamoyl phosphate synthase arginine-specific small chain (453 aa).

The N-terminal 28 residues, 1-28 (MFARVFKAMPARASALTSVNASIPARFM), are a transit peptide targeting the mitochondrion. Residues 219–406 (HVAVIDCGVK…IDSVKKYKAS (188 aa)) form the Glutamine amidotransferase type-1 domain. Cysteine 295 (nucleophile) is an active-site residue. Residues histidine 379 and glutamate 381 contribute to the active site.

It belongs to the CarA family. Heterodimer composed of 2 chains; the small (or glutamine) chain promotes the hydrolysis of glutamine to ammonia, which is used by the large (or ammonia) chain to synthesize carbamoyl phosphate.

It is found in the mitochondrion matrix. It carries out the reaction hydrogencarbonate + L-glutamine + 2 ATP + H2O = carbamoyl phosphate + L-glutamate + 2 ADP + phosphate + 2 H(+). The enzyme catalyses L-glutamine + H2O = L-glutamate + NH4(+). The protein operates within amino-acid biosynthesis; L-arginine biosynthesis; carbamoyl phosphate from bicarbonate: step 1/1. Functionally, small subunit of the arginine-specific carbamoyl phosphate synthase (CPSase). CPSase catalyzes the formation of carbamoyl phosphate from the ammonia moiety of glutamine, carbonate, and phosphate donated by ATP, the first step of the arginine biosynthetic pathway. The small subunit (glutamine amidotransferase) binds and cleaves glutamine to supply the large subunit with the substrate ammonia. In Aspergillus fumigatus (strain ATCC MYA-4609 / CBS 101355 / FGSC A1100 / Af293) (Neosartorya fumigata), this protein is Carbamoyl phosphate synthase arginine-specific small chain (cpa1).